Consider the following 158-residue polypeptide: MSDDEHHFESSDAGASKTYPQQAGNIRKGGHIVIKGRPCKVVEVSTSKTGKHGHAKCHFVAIDIFTSKKLEDIVPSSHNCDVPHVNRVDYQLIDISEDGFVSLLTDNGSTKDDLKLPTDEALLTQLKNGFEEGKDIVVSVMSAMGEEQMCALKEVGPK.

The segment covering 1-10 has biased composition (basic and acidic residues); that stretch reads MSDDEHHFES. The interval 1-23 is disordered; it reads MSDDEHHFESSDAGASKTYPQQA. Ser-2 is modified (phosphoserine). Position 51 is a hypusine (Lys-51).

The protein belongs to the eIF-5A family. Lys-52 undergoes hypusination, a unique post-translational modification that consists in the addition of a butylamino group from spermidine to lysine side chain, leading to the formation of the unusual amino acid hypusine. eIF-5As are the only known proteins to undergo this modification, which is essential for their function. As to expression, expressed in the vascular tissues of roots, stems and leaves. Localized in phloem companion cells rather than sieve-tube members. Not expressed in xylem or procambium. Detected in root tips and in the chalazal tissue of fertilized ovules.

Translation factor that promotes translation elongation and termination, particularly upon ribosome stalling at specific amino acid sequence contexts. Binds between the exit (E) and peptidyl (P) site of the ribosome and promotes rescue of stalled ribosome: specifically required for efficient translation of polyproline-containing peptides as well as other motifs that stall the ribosome. Acts as a ribosome quality control (RQC) cofactor by joining the RQC complex to facilitate peptidyl transfer during CAT tailing step. Involved in supporting growth and plays a regulatory role in the response to sub-lethal osmotic and nutrient stress. The sequence is that of Eukaryotic translation initiation factor 5A-3 (ELF5A-3) from Arabidopsis thaliana (Mouse-ear cress).